An 87-amino-acid polypeptide reads, in one-letter code: Defensin-like protein 218 (87 aa).

The first 19 residues, 1-19 (MKTIVCFLTILILVSSCES), serve as a signal peptide directing secretion. 3 disulfides stabilise this stretch: cysteine 51-cysteine 70, cysteine 54-cysteine 75, and cysteine 58-cysteine 77.

The protein belongs to the DEFL family.

Its subcellular location is the secreted. This is Defensin-like protein 218 from Arabidopsis thaliana (Mouse-ear cress).